A 613-amino-acid chain; its full sequence is Ribosome-associated molecular chaperone SSB2 (613 aa).

Alanine 2 carries the N-acetylalanine modification. A nucleotide binding domain (NBD) region spans residues 2 to 391 (AEGVFQGAIG…ILTGQSTSDE (390 aa)). Residue 16-18 (TTY) participates in ATP binding. The residue at position 47 (threonine 47) is a Phosphothreonine. ATP is bound by residues lysine 73, 205–207 (GGT), 271–278 (ERAKRTLS), and glycine 342. The interval 392-402 (TKDLLLLDVAP) is inter-domain linker. The segment at 403 to 613 (LSLGVGMQGD…RVVTKAMSSR (211 aa)) is substrate binding domain (SBD). The short motif at 428-430 (KRR) is the Contributes to ribosome binding element. A Phosphothreonine modification is found at threonine 431. Residues 516–612 (SEEIEKMVNQ…KRVVTKAMSS (97 aa)) are lid domain (SBDalpha). The Nuclear export signal motif lies at 574–582 (IEAALSDAL). Positions 601-613 (GLKRVVTKAMSSR) are required for interaction with ribosomes.

This sequence belongs to the heat shock protein 70 family. Ssb-type Hsp70 subfamily. Binds to ribosomes. Binds close to the ribosomal tunnel exit via contacts with both ribosomal proteins RPL35, RPL39 and RPL19, and rRNA. Directly interacts with nascent polypeptides. This interaction is dependent on the ribosome-associated complex (RAC). Interacts with SSE1.

Its subcellular location is the cytoplasm. It carries out the reaction ATP + H2O = ADP + phosphate + H(+). In terms of biological role, ribosome-bound, Hsp70-type chaperone that assists in the cotranslational folding of newly synthesized proteins in the cytosol. Stimulates folding by interacting with nascent chains, binding to short, largely hydrophobic sequences exposed by unfolded proteins, thereby stabilizing longer, more slowly translated, and aggregation-prone nascent polypeptides and domains that cannot fold stably until fully synthesized. The Hsp70-protein substrate interaction depends on ATP-binding and on allosteric regulation between the NBD and the SBD. The ATP-bound state is characterized by a fast exchange rate of substrate (low affinity state), while in the ADP-bound state exchange is much slower (high affinity state). During the Hsp70 cycle, the chaperone switches between the ATP-bound state (open conformation) and the ADP-bound state (closed conformation) by major conformational rearrangements involving mainly the lid domain. Ssb cooperates with a specific Hsp40/Hsp70 co-chaperone termed the ribosome-associated complex (RAC), which stimulates the ATPase activity of the ribosome-associated pool of Ssbs and switches it to the high affinity substrate binding state. Hsp110 chaperone SSE1 and FES1 act as nucleotide exchange factors that cause substrate release. This is Ribosome-associated molecular chaperone SSB2 from Saccharomyces cerevisiae (strain ATCC 204508 / S288c) (Baker's yeast).